The primary structure comprises 484 residues: Cobyric acid synthase (484 aa).

One can recognise a GATase cobBQ-type domain in the interval 251 to 438 (ALKVAVPVLS…LHGLFGSDAY (188 aa)). The active-site Nucleophile is C333. H430 is an active-site residue.

The protein belongs to the CobB/CobQ family. CobQ subfamily.

It participates in cofactor biosynthesis; adenosylcobalamin biosynthesis. In terms of biological role, catalyzes amidations at positions B, D, E, and G on adenosylcobyrinic A,C-diamide. NH(2) groups are provided by glutamine, and one molecule of ATP is hydrogenolyzed for each amidation. In Rhizobium meliloti (strain 1021) (Ensifer meliloti), this protein is Cobyric acid synthase.